Consider the following 408-residue polypeptide: Bifunctional polynucleotide phosphatase/kinase (408 aa).

Residues 1–38 (MSSKKRKSPPQESLTSYFEKSSKSSKKYGSQNKDSDSS) are disordered. Ser-8 bears the Phosphoserine mark. 2 stretches are compositionally biased toward polar residues: residues 10-19 (PQESLTSYFE) and 28-38 (YGSQNKDSDSS). 263–270 (GFPSSGKS) serves as a coordination point for ATP.

This sequence in the N-terminal section; belongs to the DNA 3' phosphatase family.

It localises to the nucleus. It catalyses the reaction a 3'end (2'-deoxyribonucleotide 3'-phosphate)-DNA + H2O = a 3'-end 2'-deoxyribonucleotide-DNA + phosphate. The enzyme catalyses a 5'-end dephospho-2'-deoxyribonucleoside-DNA + ATP = a 5'-end 5'-phospho-2'-deoxyribonucleoside-DNA + ADP + H(+). Catalyzes the phosphorylation of DNA at 5'-hydroxyl termini and can dephosphorylate its 3'-phosphate termini. Has a role in the repair of breaks in single-stranded DNA. The protein is Bifunctional polynucleotide phosphatase/kinase (pnk1) of Schizosaccharomyces pombe (strain 972 / ATCC 24843) (Fission yeast).